A 436-amino-acid chain; its full sequence is Trigger factor (436 aa).

Residues 161-246 (EDQLNIDFVG…VNTVSEPKLP (86 aa)) form the PPIase FKBP-type domain.

It belongs to the FKBP-type PPIase family. Tig subfamily.

It localises to the cytoplasm. The enzyme catalyses [protein]-peptidylproline (omega=180) = [protein]-peptidylproline (omega=0). Involved in protein export. Acts as a chaperone by maintaining the newly synthesized protein in an open conformation. Functions as a peptidyl-prolyl cis-trans isomerase. The protein is Trigger factor of Pseudomonas fluorescens (strain Pf0-1).